The chain runs to 430 residues: Methylenetetrahydrofolate--tRNA-(uracil-5-)-methyltransferase TrmFO (430 aa).

FAD is bound at residue 9–14 (GAGLAG).

It belongs to the MnmG family. TrmFO subfamily. FAD is required as a cofactor.

It localises to the cytoplasm. It catalyses the reaction uridine(54) in tRNA + (6R)-5,10-methylene-5,6,7,8-tetrahydrofolate + NADH + H(+) = 5-methyluridine(54) in tRNA + (6S)-5,6,7,8-tetrahydrofolate + NAD(+). The enzyme catalyses uridine(54) in tRNA + (6R)-5,10-methylene-5,6,7,8-tetrahydrofolate + NADPH + H(+) = 5-methyluridine(54) in tRNA + (6S)-5,6,7,8-tetrahydrofolate + NADP(+). Functionally, catalyzes the folate-dependent formation of 5-methyl-uridine at position 54 (M-5-U54) in all tRNAs. This is Methylenetetrahydrofolate--tRNA-(uracil-5-)-methyltransferase TrmFO from Fervidobacterium nodosum (strain ATCC 35602 / DSM 5306 / Rt17-B1).